The primary structure comprises 53 residues: UPF0391 membrane protein PSEEN0090 (53 aa).

Helical transmembrane passes span 4–24 (WAIT…GGIA) and 29–49 (GIAK…FFFG).

Belongs to the UPF0391 family.

The protein localises to the cell membrane. This is UPF0391 membrane protein PSEEN0090 from Pseudomonas entomophila (strain L48).